Consider the following 248-residue polypeptide: Large ribosomal subunit protein uL4 (248 aa).

Disordered regions lie at residues 72-103 and 173-210; these read RSEN…KSLN and GRSV…RNLS. Basic and acidic residues predominate over residues 92 to 103; it reads PKAEKDQTKSLN. The segment covering 177-189 has biased composition (basic residues); sequence RAGRGKTRGRKYS.

The protein belongs to the universal ribosomal protein uL4 family. In terms of assembly, part of the 50S ribosomal subunit.

Its function is as follows. One of the primary rRNA binding proteins, this protein initially binds near the 5'-end of the 23S rRNA. It is important during the early stages of 50S assembly. It makes multiple contacts with different domains of the 23S rRNA in the assembled 50S subunit and ribosome. Forms part of the polypeptide exit tunnel. In Halorubrum lacusprofundi (strain ATCC 49239 / DSM 5036 / JCM 8891 / ACAM 34), this protein is Large ribosomal subunit protein uL4.